Here is a 230-residue protein sequence, read N- to C-terminus: 2-amino-5-formylamino-6-ribosylaminopyrimidin-4(3H)-one 5'-monophosphate deformylase (230 aa).

Residues E29, H31, D40, and H109 each coordinate Fe cation.

Belongs to the creatininase superfamily. FAPy deformylase family. As to quaternary structure, homodimer. Fe(2+) serves as cofactor. The cofactor is Zn(2+).

The catalysed reaction is 2-amino-5-formylamino-6-(5-phospho-D-ribosylamino)pyrimidin-4(3H)-one + H2O = 2,5-diamino-6-(1-D-ribosylamino)pyrimidin-4(3H)-one 5'-phosphate + formate + H(+). It participates in cofactor biosynthesis; coenzyme F420 biosynthesis. It functions in the pathway cofactor biosynthesis; riboflavin biosynthesis. Catalyzes the hydrolysis of the formamide of 2-amino-5-formylamino-6-ribosylamino-4(3H)-pyrimidinone 5'-monophosphate (FAPy) to form 2,5-diamino-6-ribosylamino-4(3H)-pyrimidinone 5'-phosphate (APy). In Methanobrevibacter smithii (strain ATCC 35061 / DSM 861 / OCM 144 / PS), this protein is 2-amino-5-formylamino-6-ribosylaminopyrimidin-4(3H)-one 5'-monophosphate deformylase.